Consider the following 289-residue polypeptide: Fumagillin beta-trans-bergamotene synthase af520 (289 aa).

The next 6 membrane-spanning stretches (helical) occupy residues alanine 35–tryptophan 55, threonine 95–isoleucine 115, leucine 142–glycine 162, leucine 165–histidine 185, alanine 222–valine 242, and tyrosine 262–proline 282.

Belongs to the paxB family.

The protein localises to the membrane. The catalysed reaction is (2E,6E)-farnesyl diphosphate = (+)-exo-beta-bergamotene + diphosphate. It functions in the pathway secondary metabolite biosynthesis; terpenoid biosynthesis. Functionally, beta-trans-bergamotene synthase; part of the gene cluster that mediates the biosynthesis of fumagillin, a meroterpenoid that has numerous biological activities including irreversible inhibition of human type 2 methionine aminopeptidase (METAP2). Within the pathway, the membrane-bound fumagillin beta-trans-bergamotene synthase af520 converts farnesyl pyrophosphate (FPP) to beta-trans-bergamotene. The pathway begins with the conversion of FPP to beta-trans-bergamotene by af520. The multifunctional cytochrome P450 monooxygenase af510 then converts beta-trans-bergamotene into 5-keto-demethoxyfumagillol via several oxydation steps. 5-keto-demethoxyfumagillol is then subjected to successive C-6 hydroxylation and O-methylation by the dioxygenase af480 and O-methyltransferase af390-400, respectively, to yield 5-keto-fumagillol, which is then stereoselectively reduced by the keto-reductase af490 to 5R-hydroxy-seco-sesquiterpene. The next step is the polyketide transferase af380-catalyzed transfer of a dodecapentaenoyl group synthesized by the polyketide synthase af370 onto 5R-hydroxy-seco-sesquiterpene which leads to the production of prefumagillin. Finally, oxidative cleavage by the monooxygenase af470 converts prefumagillin to fumagillin. The chain is Fumagillin beta-trans-bergamotene synthase af520 from Aspergillus fumigatus (strain ATCC MYA-4609 / CBS 101355 / FGSC A1100 / Af293) (Neosartorya fumigata).